The chain runs to 445 residues: Membrane protein insertase YidC (445 aa).

The next 5 membrane-spanning stretches (helical) occupy residues 6-26 (VVAI…PIKV), 248-268 (FGWA…PLYH), 313-333 (ASGC…WSVI), 352-372 (LSAG…VASY), and 388-408 (GIIM…GLFL).

The protein belongs to the OXA1/ALB3/YidC family. Type 1 subfamily. Interacts with the Sec translocase complex via SecD. Specifically interacts with transmembrane segments of nascent integral membrane proteins during membrane integration.

Its subcellular location is the cell inner membrane. Functionally, required for the insertion and/or proper folding and/or complex formation of integral membrane proteins into the membrane. Involved in integration of membrane proteins that insert both dependently and independently of the Sec translocase complex, as well as at least some lipoproteins. Aids folding of multispanning membrane proteins. The protein is Membrane protein insertase YidC of Thermotoga maritima (strain ATCC 43589 / DSM 3109 / JCM 10099 / NBRC 100826 / MSB8).